Here is a 259-residue protein sequence, read N- to C-terminus: Large ribosomal subunit protein uL2m (259 aa).

Residues 234–259 (VAMNPVDHPNGGRTKTPKPERSPGVE) are disordered. Residues 250–259 (PKPERSPGVE) are compositionally biased toward basic and acidic residues.

This sequence belongs to the universal ribosomal protein uL2 family.

It localises to the mitochondrion. This Paramecium tetraurelia protein is Large ribosomal subunit protein uL2m (RPL2).